Consider the following 505-residue polypeptide: Trans-cinnamate 4-monooxygenase (505 aa).

Residues 3–23 traverse the membrane as a helical segment; the sequence is LLLIEKTLVALFAAIIGAILI. (E)-cinnamate contacts are provided by residues 213–218 and alanine 306; that span reads RSRLAQ. Cysteine 447 contacts heme.

The protein belongs to the cytochrome P450 family. Requires heme as cofactor.

The protein resides in the membrane. The catalysed reaction is (E)-cinnamate + reduced [NADPH--hemoprotein reductase] + O2 = (E)-4-coumarate + oxidized [NADPH--hemoprotein reductase] + H2O + H(+). It functions in the pathway phenylpropanoid metabolism; trans-4-coumarate biosynthesis; trans-4-coumarate from trans-cinnamate: step 1/1. Its activity is regulated as follows. Inactivated by piperonylic acid. In terms of biological role, catalyzes the first oxidative step of the phenylpropanoid pathway in higher plants by transforming trans-cinnamate into p-coumarate. The compounds formed by this pathway are essential components for lignification, pollination, and defense against ultraviolet light, predators and pathogens. Can also use 2-naphthoic acid as substrate. This chain is Trans-cinnamate 4-monooxygenase, found in Helianthus tuberosus (Jerusalem artichoke).